We begin with the raw amino-acid sequence, 224 residues long: MSLSNSLGLLGRKVGMMRLFTDDGDAVPVTVVDVSNNRVTQVKTQENDGYVALQVTFGSRKASRVTKPEAGHLAKAGVEAGEIIREFRVTAETAGKYATGAAVPVADVFSVGQKVDVQGTSIGKGYAGTIKRHNMASQRASHGNSRSHNVPGSIGMAQDPGRVFPGKRMTGHLGDATTTTQNLDVIRVDEARQLLLIKGAIPGSKGGFVTVRPAVKAKASQGAN.

Gln-158 bears the N5-methylglutamine mark.

This sequence belongs to the universal ribosomal protein uL3 family. Part of the 50S ribosomal subunit. Forms a cluster with proteins L14 and L19. In terms of processing, methylated by PrmB.

Its function is as follows. One of the primary rRNA binding proteins, it binds directly near the 3'-end of the 23S rRNA, where it nucleates assembly of the 50S subunit. In Paracidovorax citrulli (strain AAC00-1) (Acidovorax citrulli), this protein is Large ribosomal subunit protein uL3.